A 602-amino-acid chain; its full sequence is Sodium- and chloride-dependent GABA transporter 2 (602 aa).

The Cytoplasmic portion of the chain corresponds to 1 to 40 (MENRASGTTSNGETKPVCPAMEKVEEDGTLEREHWNNKME). The next 3 helical transmembrane spans lie at 41–61 (FVLS…FPYL), 68–88 (GAFF…VFFL), and 121–141 (IVSL…FYLF). Topologically, residues 142-206 (SSFTTDLPWG…GIQHLGSLRW (65 aa)) are extracellular. C153 and C162 are joined by a disulfide. N169, N173, and N178 each carry an N-linked (GlcNAc...) asparagine glycan. 2 helical membrane passes run 207–227 (ELVL…WKGV) and 233–253 (VVYF…IRGV). N269 carries N-linked (GlcNAc...) asparagine glycosylation. The next 7 helical transmembrane spans lie at 282–302 (AGTQ…ALGS), 319–339 (ILNS…LGFM), 366–386 (VVML…VVLL), 418–438 (VLIL…LTEG), 453–473 (GMCL…VYGA), 490–510 (PLIK…TFLF), and 528–548 (WWGD…IPAW). Residues 549 to 602 (SIYKLRTLKGPLRERLRQLVCPAEDLPQKNQPEPTAPATPMTSLLRLTELESNC) lie on the Cytoplasmic side of the membrane. At T587 the chain carries Phosphothreonine. S591 is subject to Phosphoserine.

It belongs to the sodium:neurotransmitter symporter (SNF) (TC 2.A.22) family. SLC6A13 subfamily. Expressed at high levels in liver, followed by kidney and leptomeninges, and very low levels in the cerebellum (at protein level). In the brain, detected in some blood vessels (at protein level). In the kidney, expressed in the cortex, including parts of the proximal tubules, but not in the medulla (at protein level). In the liver, highest expression in periportal hepatocytes, with highest density at the vascular side (at protein level). Also detected at low levels in other organs, including skeletal muscle.

The protein localises to the cell membrane. The protein resides in the basolateral cell membrane. It catalyses the reaction 4-aminobutanoate(out) + chloride(out) + 2 Na(+)(out) = 4-aminobutanoate(in) + chloride(in) + 2 Na(+)(in). It carries out the reaction taurine(out) + chloride(out) + 2 Na(+)(out) = taurine(in) + chloride(in) + 2 Na(+)(in). The enzyme catalyses beta-alanine(out) + chloride(out) + 2 Na(+)(out) = beta-alanine(in) + chloride(in) + 2 Na(+)(in). The catalysed reaction is hypotaurine(out) + chloride(out) + 2 Na(+)(out) = hypotaurine(in) + chloride(in) + 2 Na(+)(in). Its activity is regulated as follows. Gamma-aminobutyric acid (GABA) transport is inhibited by beta-alanine, taurine, hypotaurine, beta-guanidinopropionic acid, 2,3-diaminopropionic acid, guvacine and nipecotic acid. Beta-alanine transport is inhibited by GABA. Taurine transport is inhibited by GABA, beta-alanine, SNAP-5114, nigericin, nipecotic acid and ouabain. Functionally, mediates sodium- and chloride-dependent transport of gamma-aminobutyric acid (GABA). Can also mediate transport of beta-alanine, taurine and hypotaurine and is the major taurine transporter in hepatocytes. This Mus musculus (Mouse) protein is Sodium- and chloride-dependent GABA transporter 2 (Slc6a13).